The chain runs to 349 residues: Dehydrogenase FPY6 (349 aa).

The protein belongs to the Gfo/Idh/MocA family.

It functions in the pathway secondary metabolite biosynthesis. In terms of biological role, dehydrogenase; part of the gene cluster that mediates the biosynthesis of the gamma-pyrones fusapyrone (FPY) and deoxyfusapyrone (dFPY). FPY is an undecaketide and thus likely synthesized by the polyketide synthase FPY1 from acetyl-CoA functioning as starter unit and the addition of 10 malonyl-CoA extender units by successive Claisen-condensations. Next to this, FPY shares some rare features: C-glycosylated 4-deoxyglucose at C-3, a gem-dimethyl group at C-13, and an alpha-beta to beta-gamma double bond shift at C-20. During FPY biosynthesis mono-C-methyl groups are transferred to the tetra-, penta-, hexa- and heptaketide, while two C-methyl groups are transferred to the nonaketide, suggesting that the CMet domain is programmed to selectively catalyze two successive C-alpha-methylation reactions of the nonaketide, while other alpha-carbons are non- or mono-methylated only. While the origin of the 4'-deoxyglucose moiety remains opaque, its transfer to C-3 is most likely mediated by the C-glycosyltransferase FPY2. Next to this, the hydroxyl group present at C-33 and discriminating between FPY and dFPY, is likely to be installed by the cytochrome P450 monooxygenase FPY7. No putative function can be predicted for the remaining genes FPY3-FPY6. This chain is Dehydrogenase FPY6, found in Fusarium mangiferae (Mango malformation disease fungus).